The sequence spans 436 residues: 3-ketoacyl-CoA thiolase (436 aa).

Catalysis depends on Cys99, which acts as the Acyl-thioester intermediate. Catalysis depends on proton acceptor residues His392 and Cys422.

This sequence belongs to the thiolase-like superfamily. Thiolase family. As to quaternary structure, heterotetramer of two alpha chains (FadJ) and two beta chains (FadI).

The protein localises to the cytoplasm. It catalyses the reaction an acyl-CoA + acetyl-CoA = a 3-oxoacyl-CoA + CoA. It participates in lipid metabolism; fatty acid beta-oxidation. In terms of biological role, catalyzes the final step of fatty acid oxidation in which acetyl-CoA is released and the CoA ester of a fatty acid two carbons shorter is formed. The sequence is that of 3-ketoacyl-CoA thiolase from Yersinia pestis bv. Antiqua (strain Angola).